The sequence spans 449 residues: Tubulin alpha-1B chain (449 aa).

A GTP-binding site is contributed by glutamine 11. At lysine 40 the chain carries N6-acetyllysine. Glutamate 71, serine 140, glycine 144, threonine 145, threonine 179, asparagine 206, and asparagine 228 together coordinate GTP. Mg(2+) is bound at residue glutamate 71. Glutamate 254 is an active-site residue.

Belongs to the tubulin family. Dimer of alpha and beta chains. A typical microtubule is a hollow water-filled tube with an outer diameter of 25 nm and an inner diameter of 15 nM. Alpha-beta heterodimers associate head-to-tail to form protofilaments running lengthwise along the microtubule wall with the beta-tubulin subunit facing the microtubule plus end conferring a structural polarity. Microtubules usually have 13 protofilaments but different protofilament numbers can be found in some organisms and specialized cells. It depends on Mg(2+) as a cofactor. Post-translationally, acetylation of alpha chains at Lys-40 stabilizes microtubules and affects affinity and processivity of microtubule motors. This modification has a role in multiple cellular functions, ranging from cell motility, cell cycle progression or cell differentiation to intracellular trafficking and signaling.

Its subcellular location is the cytoplasm. It is found in the cytoskeleton. It localises to the spindle. The protein localises to the nucleus. The enzyme catalyses GTP + H2O = GDP + phosphate + H(+). Tubulin is the major constituent of microtubules, a cylinder consisting of laterally associated linear protofilaments composed of alpha- and beta-tubulin heterodimers. Microtubules grow by the addition of GTP-tubulin dimers to the microtubule end, where a stabilizing cap forms. Below the cap, tubulin dimers are in GDP-bound state, owing to GTPase activity of alpha-tubulin. In Physarum polycephalum (Slime mold), this protein is Tubulin alpha-1B chain (ALTBN).